Consider the following 212-residue polypeptide: Thymidylate kinase (212 aa).

10–17 (GLEGAGKT) contributes to the ATP binding site.

The protein belongs to the thymidylate kinase family.

The catalysed reaction is dTMP + ATP = dTDP + ADP. In terms of biological role, phosphorylation of dTMP to form dTDP in both de novo and salvage pathways of dTTP synthesis. The sequence is that of Thymidylate kinase from Yersinia pseudotuberculosis serotype O:1b (strain IP 31758).